The chain runs to 590 residues: Arginine--tRNA ligase, cytoplasmic (590 aa).

The residue at position 2 (alanine 2) is an N-acetylalanine. Residues 137 to 139 (SPN), histidine 148, tyrosine 322, aspartate 326, and glutamine 350 contribute to the L-arginine site. Positions 138–149 (PNIAKEMHVGHL) match the 'HIGH' region motif. Residues 470–484 (DTAVYLLYAHARICS) are interaction with tRNA.

This sequence belongs to the class-I aminoacyl-tRNA synthetase family.

It localises to the cytoplasm. Its subcellular location is the cytosol. It catalyses the reaction tRNA(Arg) + L-arginine + ATP = L-arginyl-tRNA(Arg) + AMP + diphosphate. Forms part of a macromolecular complex that catalyzes the attachment of specific amino acids to cognate tRNAs during protein synthesis. The chain is Arginine--tRNA ligase, cytoplasmic from Arabidopsis thaliana (Mouse-ear cress).